The sequence spans 247 residues: Triosephosphate isomerase (247 aa).

Positions 10 and 12 each coordinate substrate. His-95 (electrophile) is an active-site residue. The active-site Proton acceptor is Glu-165.

The protein belongs to the triosephosphate isomerase family. As to quaternary structure, homodimer.

The enzyme catalyses D-glyceraldehyde 3-phosphate = dihydroxyacetone phosphate. It functions in the pathway carbohydrate biosynthesis; gluconeogenesis. Its pathway is carbohydrate degradation; glycolysis; D-glyceraldehyde 3-phosphate from glycerone phosphate: step 1/1. The sequence is that of Triosephosphate isomerase (TPI1) from Yarrowia lipolytica (strain CLIB 122 / E 150) (Yeast).